Reading from the N-terminus, the 432-residue chain is Enolase (432 aa).

Q167 contacts (2R)-2-phosphoglycerate. Residue E209 is the Proton donor of the active site. 3 residues coordinate Mg(2+): D246, E290, and D317. 4 residues coordinate (2R)-2-phosphoglycerate: K342, R371, S372, and K393. The Proton acceptor role is filled by K342.

It belongs to the enolase family. Component of the RNA degradosome, a multiprotein complex involved in RNA processing and mRNA degradation. It depends on Mg(2+) as a cofactor.

It is found in the cytoplasm. It localises to the secreted. Its subcellular location is the cell surface. It carries out the reaction (2R)-2-phosphoglycerate = phosphoenolpyruvate + H2O. It functions in the pathway carbohydrate degradation; glycolysis; pyruvate from D-glyceraldehyde 3-phosphate: step 4/5. In terms of biological role, catalyzes the reversible conversion of 2-phosphoglycerate (2-PG) into phosphoenolpyruvate (PEP). It is essential for the degradation of carbohydrates via glycolysis. This is Enolase from Klebsiella pneumoniae subsp. pneumoniae (strain ATCC 700721 / MGH 78578).